A 706-amino-acid chain; its full sequence is Ribosomal RNA large subunit methyltransferase K/L (706 aa).

One can recognise a THUMP domain in the interval 43 to 154; it reads LMYQSLLWSR…RDMASVALDL (112 aa).

Belongs to the methyltransferase superfamily. RlmKL family.

The protein resides in the cytoplasm. The catalysed reaction is guanosine(2445) in 23S rRNA + S-adenosyl-L-methionine = N(2)-methylguanosine(2445) in 23S rRNA + S-adenosyl-L-homocysteine + H(+). It catalyses the reaction guanosine(2069) in 23S rRNA + S-adenosyl-L-methionine = N(2)-methylguanosine(2069) in 23S rRNA + S-adenosyl-L-homocysteine + H(+). Its function is as follows. Specifically methylates the guanine in position 2445 (m2G2445) and the guanine in position 2069 (m7G2069) of 23S rRNA. The sequence is that of Ribosomal RNA large subunit methyltransferase K/L from Yersinia pestis bv. Antiqua (strain Antiqua).